Reading from the N-terminus, the 485-residue chain is NADH-quinone oxidoreductase subunit N (485 aa).

The next 14 membrane-spanning stretches (helical) occupy residues 8–28, 35–55, 75–95, 104–124, 125–145, 159–179, 203–223, 235–255, 271–291, 297–317, 326–346, 383–403, 406–426, and 455–475; these read LIAL…MLSI, FINT…LYFV, LYIG…YSWL, EFYL…CANH, LASL…LIGY, YMLL…LLYA, ILSG…LVPF, PAPV…AVVI, TVLT…ALTQ, LLGY…VAVQ, VGIY…VVSL, LAGI…VLGV, ELWW…YYYL, and MVVL…QPLI.

Belongs to the complex I subunit 2 family. As to quaternary structure, NDH-1 is composed of 13 different subunits. Subunits NuoA, H, J, K, L, M, N constitute the membrane sector of the complex.

The protein localises to the cell inner membrane. The catalysed reaction is a quinone + NADH + 5 H(+)(in) = a quinol + NAD(+) + 4 H(+)(out). Its function is as follows. NDH-1 shuttles electrons from NADH, via FMN and iron-sulfur (Fe-S) centers, to quinones in the respiratory chain. The immediate electron acceptor for the enzyme in this species is believed to be ubiquinone. Couples the redox reaction to proton translocation (for every two electrons transferred, four hydrogen ions are translocated across the cytoplasmic membrane), and thus conserves the redox energy in a proton gradient. The protein is NADH-quinone oxidoreductase subunit N of Photorhabdus laumondii subsp. laumondii (strain DSM 15139 / CIP 105565 / TT01) (Photorhabdus luminescens subsp. laumondii).